Here is a 382-residue protein sequence, read N- to C-terminus: Ribosomal RNA large subunit methyltransferase G (382 aa).

Belongs to the methyltransferase superfamily. RlmG family.

The protein localises to the cytoplasm. It catalyses the reaction guanosine(1835) in 23S rRNA + S-adenosyl-L-methionine = N(2)-methylguanosine(1835) in 23S rRNA + S-adenosyl-L-homocysteine + H(+). Specifically methylates the guanine in position 1835 (m2G1835) of 23S rRNA. The sequence is that of Ribosomal RNA large subunit methyltransferase G from Aliivibrio fischeri (strain ATCC 700601 / ES114) (Vibrio fischeri).